The sequence spans 742 residues: 5-methyltetrahydropteroyltriglutamate--homocysteine methyltransferase (742 aa).

Residues 18-21 (REWK) and Lys112 contribute to the 5-methyltetrahydropteroyltri-L-glutamate site. L-homocysteine-binding positions include 420–422 (IGS) and Glu473. Residues 420-422 (IGS) and Glu473 contribute to the L-methionine site. Trp550 is a 5-methyltetrahydropteroyltri-L-glutamate binding site. Asp588 contributes to the L-homocysteine binding site. An L-methionine-binding site is contributed by Asp588. Glu594 serves as a coordination point for 5-methyltetrahydropteroyltri-L-glutamate. 3 residues coordinate Zn(2+): His630, Cys632, and Glu654. The active-site Proton donor is the His683. Residue Cys715 participates in Zn(2+) binding.

The protein belongs to the vitamin-B12 independent methionine synthase family. Requires Zn(2+) as cofactor.

It carries out the reaction 5-methyltetrahydropteroyltri-L-glutamate + L-homocysteine = tetrahydropteroyltri-L-glutamate + L-methionine. Its pathway is amino-acid biosynthesis; L-methionine biosynthesis via de novo pathway; L-methionine from L-homocysteine (MetE route): step 1/1. In terms of biological role, catalyzes the transfer of a methyl group from 5-methyltetrahydrofolate to homocysteine resulting in methionine formation. The sequence is that of 5-methyltetrahydropteroyltriglutamate--homocysteine methyltransferase from Staphylococcus aureus (strain USA300).